The primary structure comprises 617 residues: Chaperone protein HscA homolog (617 aa).

This sequence belongs to the heat shock protein 70 family.

In terms of biological role, probable chaperone. Has a low intrinsic ATPase activity which is markedly stimulated by HscB. In Vibrio vulnificus (strain CMCP6), this protein is Chaperone protein HscA homolog.